The following is a 304-amino-acid chain: Large ribosomal subunit protein uL18 (304 aa).

This sequence belongs to the universal ribosomal protein uL18 family. In terms of assembly, component of a hexameric 5S RNP precursor complex, composed of 5S RNA, RRS1, RPF2, RPL5, RPL11 and SYO1; this complex acts as a precursor for ribosome assembly.

Its subcellular location is the cytoplasm. In terms of biological role, component of the ribosome, a large ribonucleoprotein complex responsible for the synthesis of proteins in the cell. The small ribosomal subunit (SSU) binds messenger RNAs (mRNAs) and translates the encoded message by selecting cognate aminoacyl-transfer RNA (tRNA) molecules. The large subunit (LSU) contains the ribosomal catalytic site termed the peptidyl transferase center (PTC), which catalyzes the formation of peptide bonds, thereby polymerizing the amino acids delivered by tRNAs into a polypeptide chain. The nascent polypeptides leave the ribosome through a tunnel in the LSU and interact with protein factors that function in enzymatic processing, targeting, and the membrane insertion of nascent chains at the exit of the ribosomal tunnel. The chain is Large ribosomal subunit protein uL18 from Chaetomium thermophilum (strain DSM 1495 / CBS 144.50 / IMI 039719) (Thermochaetoides thermophila).